The primary structure comprises 131 residues: Methylglyoxal synthase (131 aa).

The region spanning 1 to 131 is the MGS-like domain; the sequence is MKIALIAHDK…GDLDYRKFRK (131 aa). Residues H8, K12, 34–37, and 54–55 contribute to the substrate site; these read TGTT and SG. The active-site Proton donor/acceptor is D60. Residue H87 coordinates substrate.

The protein belongs to the methylglyoxal synthase family.

The catalysed reaction is dihydroxyacetone phosphate = methylglyoxal + phosphate. In terms of biological role, catalyzes the formation of methylglyoxal from dihydroxyacetone phosphate. In Bacillus cytotoxicus (strain DSM 22905 / CIP 110041 / 391-98 / NVH 391-98), this protein is Methylglyoxal synthase.